The sequence spans 156 residues: Small ribosomal subunit protein uS7 (156 aa).

This sequence belongs to the universal ribosomal protein uS7 family. Part of the 30S ribosomal subunit. Contacts proteins S9 and S11.

In terms of biological role, one of the primary rRNA binding proteins, it binds directly to 16S rRNA where it nucleates assembly of the head domain of the 30S subunit. Is located at the subunit interface close to the decoding center, probably blocks exit of the E-site tRNA. The polypeptide is Small ribosomal subunit protein uS7 (Bacillus cytotoxicus (strain DSM 22905 / CIP 110041 / 391-98 / NVH 391-98)).